We begin with the raw amino-acid sequence, 737 residues long: Transcription activator MSS11 (737 aa).

The tract at residues 1-23 is disordered; the sequence is MDNTTNINTNERSSNTDFSSAPN. The LisH domain maps to 51-83; it reads SKQLLYAHIYNYLIKNNYWNSAAKFLSEADLPL. Disordered stretches follow at residues 191–220, 268–347, 413–439, and 572–660; these read TQNS…TNRN, LQSP…PTNQ, GNQN…NANG, and KTNT…TKES. Residues 207–220 show a composition bias toward polar residues; the sequence is DGSNFNLNDPTNRN. Residues 269 to 314 show a composition bias toward low complexity; the sequence is QSPAQPQQSSQQQIQQPQRQPQHQQQQQQQQQQQQQQQQQQQQQQQ. 3 stretches are compositionally biased toward polar residues: residues 330-347, 421-439, and 572-585; these read SENS…PTNQ, TRNN…NANG, and KTNT…STSV. The segment covering 590-643 has biased composition (low complexity); the sequence is NNNNNNNNNNNNNNNSNNSNNNNNNNNSNNTPTVSQPSSKRTSSSSTTPNITTT. A compositionally biased stretch (basic residues) spans 646–655; that stretch reads PKRKQRVGKT.

The protein belongs to the MSS11 family. In terms of assembly, interacts with FLO8, STE12 and TEC1.

Its subcellular location is the cytoplasm. The protein localises to the nucleus. In terms of biological role, transcription factor that regulates pseudohyphal differentiation, invasive growth, floculation, adhesion and starch metabolism in response to nutrient availability. The protein is Transcription activator MSS11 (MSS11) of Saccharomyces cerevisiae (strain YJM789) (Baker's yeast).